The following is a 180-amino-acid chain: NADH-quinone oxidoreductase subunit I (180 aa).

4Fe-4S ferredoxin-type domains are found at residues 46-80 (GRIVLTCDPDGYERCVACNLCAVACPVDCISLQKT) and 90-119 (EFFRINFSRCIFCGLCEEACPTTAIQLTPD). Cys60, Cys63, Cys66, Cys70, Cys99, Cys102, Cys105, and Cys109 together coordinate [4Fe-4S] cluster.

This sequence belongs to the complex I 23 kDa subunit family. As to quaternary structure, NDH-1 is composed of 14 different subunits. Subunits NuoA, H, J, K, L, M, N constitute the membrane sector of the complex. [4Fe-4S] cluster serves as cofactor.

The protein localises to the cell membrane. It catalyses the reaction a quinone + NADH + 5 H(+)(in) = a quinol + NAD(+) + 4 H(+)(out). In terms of biological role, NDH-1 shuttles electrons from NADH, via FMN and iron-sulfur (Fe-S) centers, to quinones in the respiratory chain. The immediate electron acceptor for the enzyme in this species is believed to be ubiquinone. Couples the redox reaction to proton translocation (for every two electrons transferred, four hydrogen ions are translocated across the cytoplasmic membrane), and thus conserves the redox energy in a proton gradient. The chain is NADH-quinone oxidoreductase subunit I from Baumannia cicadellinicola subsp. Homalodisca coagulata.